A 440-amino-acid chain; its full sequence is tRNA(Ile)-lysidine synthase (440 aa).

Residue 31 to 36 (SGGADS) coordinates ATP.

It belongs to the tRNA(Ile)-lysidine synthase family.

It localises to the cytoplasm. The catalysed reaction is cytidine(34) in tRNA(Ile2) + L-lysine + ATP = lysidine(34) in tRNA(Ile2) + AMP + diphosphate + H(+). Functionally, ligates lysine onto the cytidine present at position 34 of the AUA codon-specific tRNA(Ile) that contains the anticodon CAU, in an ATP-dependent manner. Cytidine is converted to lysidine, thus changing the amino acid specificity of the tRNA from methionine to isoleucine. The protein is tRNA(Ile)-lysidine synthase of Borreliella afzelii (strain PKo) (Borrelia afzelii).